The sequence spans 112 residues: Nitrogenase-stabilizing/protective protein NifW (112 aa).

It belongs to the NifW family. In terms of assembly, homotrimer; associates with NifD.

In terms of biological role, may protect the nitrogenase Fe-Mo protein from oxidative damage. This chain is Nitrogenase-stabilizing/protective protein NifW, found in Rhodopseudomonas palustris (strain BisA53).